We begin with the raw amino-acid sequence, 108 residues long: UPF0060 membrane protein YnfA (108 aa).

Residues 1-5 are Periplasmic-facing; the sequence is MLKTT. Residues 6-26 form a helical membrane-spanning segment; it reads LLFFVTALCEIIGCFLPWLWL. Topologically, residues 27–30 are cytoplasmic; that stretch reads KRGA. A helical transmembrane segment spans residues 31–51; it reads SMWWLLPAAASLALFVWLLTL. Residues 52–60 are Periplasmic-facing; that stretch reads HPAASGRVY. Residues 61–81 traverse the membrane as a helical segment; the sequence is AAYGGVYVCTALLWLRVVDGV. Residues 82–84 lie on the Cytoplasmic side of the membrane; sequence RLT. A helical transmembrane segment spans residues 85-105; the sequence is VYDWCGALIALCGMLIIVVGW. Over 106-108 the chain is Periplasmic; sequence GRT.

This sequence belongs to the UPF0060 family.

It localises to the cell inner membrane. The chain is UPF0060 membrane protein YnfA from Salmonella schwarzengrund (strain CVM19633).